Consider the following 987-residue polypeptide: SNF2 domain-containing protein ENL1 (987 aa).

Disordered stretches follow at residues 1–172 (MASP…AYGG) and 224–245 (FGDY…ENHA). 2 stretches are compositionally biased toward pro residues: residues 18–27 (TPPAPTPLAA) and 51–71 (NPNP…PQEP). Over residues 99–110 (DSIRDILDDLTT) the composition is skewed to basic and acidic residues. Residues 141–156 (PSQSQLNDGTKPSSSF) show a composition bias toward polar residues. Positions 226–237 (DYDDEDDIDQDA) are enriched in acidic residues. The region spanning 292 to 466 (WVLHCRGTGG…WALFYFCCPE (175 aa)) is the Helicase ATP-binding domain. 305–312 (DDMGLGKT) is a binding site for ATP. A DEAH box motif is present at residues 417–420 (DEGH). The 157-residue stretch at 645–801 (SLLQNLVSEG…TRYFSKRDIQ (157 aa)) folds into the Helicase C-terminal domain.

Belongs to the SNF2/RAD54 helicase family. In terms of tissue distribution, expressed in ovaries, roots, shoots and leaves.

Its subcellular location is the cytoplasm. It is found in the chromosome. Its function is as follows. DNA helicase that acts as an essential component of the spindle assembly checkpoint. Plays an indispensable role in the development of seed endosperm. Is required to secure sister chromosome separation during endosperm syncytial mitosis, which involves extremely rapid free nuclear cycles. This is SNF2 domain-containing protein ENL1 from Oryza sativa subsp. japonica (Rice).